Reading from the N-terminus, the 150-residue chain is Large ribosomal subunit protein uL15 (150 aa).

Positions 1–57 (MSLTLQSLKPQKGARRRKMRKGRGIAAGQGASCGFGMRGQKSRSGRPTRPGFEGGQM) are disordered. A compositionally biased stretch (basic residues) spans 12–23 (KGARRRKMRKGR). Over residues 25–37 (IAAGQGASCGFGM) the composition is skewed to gly residues.

The protein belongs to the universal ribosomal protein uL15 family. Part of the 50S ribosomal subunit.

Its function is as follows. Binds to the 23S rRNA. This chain is Large ribosomal subunit protein uL15, found in Synechococcus sp. (strain RCC307).